The chain runs to 215 residues: Cytochrome b6 (215 aa).

A helical transmembrane segment spans residues 32–52 (IFYCLGGITLTCFLVQVATGF). Position 35 (cysteine 35) interacts with heme c. Residues histidine 86 and histidine 100 each coordinate heme b. 3 helical membrane-spanning segments follow: residues 90-110 (ASMM…TGGF), 116-136 (LTWV…VTGY), and 186-206 (LHTF…FLMI). Residues histidine 187 and histidine 202 each contribute to the heme b site.

This sequence belongs to the cytochrome b family. PetB subfamily. In terms of assembly, the 4 large subunits of the cytochrome b6-f complex are cytochrome b6, subunit IV (17 kDa polypeptide, PetD), cytochrome f and the Rieske protein, while the 4 small subunits are PetG, PetL, PetM and PetN. The complex functions as a dimer. The cofactor is heme b. It depends on heme c as a cofactor.

The protein resides in the plastid. It is found in the chloroplast thylakoid membrane. Component of the cytochrome b6-f complex, which mediates electron transfer between photosystem II (PSII) and photosystem I (PSI), cyclic electron flow around PSI, and state transitions. In Welwitschia mirabilis (Tree tumbo), this protein is Cytochrome b6.